Consider the following 106-residue polypeptide: MPQGGTPCRRARRAVRPERPTSPEGVFCVGGGAPGGPPDTTNTVSAEGANKHSKRYLLSESLLSAGIVRGKLTELNIQSELGHISDRLFWLGEAECNAVVPDFRSR.

The disordered stretch occupies residues 1 to 46; that stretch reads MPQGGTPCRRARRAVRPERPTSPEGVFCVGGGAPGGPPDTTNTVSA.

This is an uncharacterized protein from Gracula (BFDV).